We begin with the raw amino-acid sequence, 302 residues long: Methionyl-tRNA formyltransferase (302 aa).

108–111 contributes to the (6S)-5,6,7,8-tetrahydrofolate binding site; the sequence is SLLP. Residues 276–288 are compositionally biased toward basic and acidic residues; sequence REGKRPMEPEEFL. Positions 276 to 302 are disordered; the sequence is REGKRPMEPEEFLRGFPLPEGSRAHTA.

This sequence belongs to the Fmt family.

The catalysed reaction is L-methionyl-tRNA(fMet) + (6R)-10-formyltetrahydrofolate = N-formyl-L-methionyl-tRNA(fMet) + (6S)-5,6,7,8-tetrahydrofolate + H(+). Attaches a formyl group to the free amino group of methionyl-tRNA(fMet). The formyl group appears to play a dual role in the initiator identity of N-formylmethionyl-tRNA by promoting its recognition by IF2 and preventing the misappropriation of this tRNA by the elongation apparatus. In Cereibacter sphaeroides (strain ATCC 17029 / ATH 2.4.9) (Rhodobacter sphaeroides), this protein is Methionyl-tRNA formyltransferase.